The primary structure comprises 638 residues: Phosphomethylpyrimidine synthase (638 aa).

Substrate is bound by residues asparagine 235, methionine 264, tyrosine 293, histidine 329, 349–351 (SRG), 390–393 (DGLR), and glutamate 429. Residue histidine 433 participates in Zn(2+) binding. Substrate is bound at residue tyrosine 456. Residue histidine 497 participates in Zn(2+) binding. 3 residues coordinate [4Fe-4S] cluster: cysteine 577, cysteine 580, and cysteine 585.

The protein belongs to the ThiC family. In terms of assembly, homodimer. The cofactor is [4Fe-4S] cluster.

The enzyme catalyses 5-amino-1-(5-phospho-beta-D-ribosyl)imidazole + S-adenosyl-L-methionine = 4-amino-2-methyl-5-(phosphooxymethyl)pyrimidine + CO + 5'-deoxyadenosine + formate + L-methionine + 3 H(+). The protein operates within cofactor biosynthesis; thiamine diphosphate biosynthesis. Its function is as follows. Catalyzes the synthesis of the hydroxymethylpyrimidine phosphate (HMP-P) moiety of thiamine from aminoimidazole ribotide (AIR) in a radical S-adenosyl-L-methionine (SAM)-dependent reaction. The chain is Phosphomethylpyrimidine synthase from Polaromonas naphthalenivorans (strain CJ2).